The primary structure comprises 52 residues: Large ribosomal subunit protein bL33 (52 aa).

The protein belongs to the bacterial ribosomal protein bL33 family.

This chain is Large ribosomal subunit protein bL33, found in Helicobacter acinonychis (strain Sheeba).